A 503-amino-acid polypeptide reads, in one-letter code: Glutamate--tRNA ligase (503 aa).

Positions 9-19 (PSPTGDPHVGT) match the 'HIGH' region motif. The short motif at 251 to 255 (KLSKR) is the 'KMSKS' region element. K254 is a binding site for ATP.

The protein belongs to the class-I aminoacyl-tRNA synthetase family. Glutamate--tRNA ligase type 1 subfamily. Monomer.

It localises to the cytoplasm. The enzyme catalyses tRNA(Glu) + L-glutamate + ATP = L-glutamyl-tRNA(Glu) + AMP + diphosphate. Functionally, catalyzes the attachment of glutamate to tRNA(Glu) in a two-step reaction: glutamate is first activated by ATP to form Glu-AMP and then transferred to the acceptor end of tRNA(Glu). The polypeptide is Glutamate--tRNA ligase (Saccharophagus degradans (strain 2-40 / ATCC 43961 / DSM 17024)).